The primary structure comprises 977 residues: MRGYHGDRGSHPRPARFADQQHMDVGPAARAPYLLGSREAFSTEPRFCAPRAGLGHLSPEGPLSLSEGPSSVGPEGGPGGVGAGGSSSTFPRMYPGQGPFDTCEDCVGHPQGKGATRLLPTFLDQFEKQLPVQQDGFHTLPYQRGPAGPGPGPGSGAAPEARSESPSRIRHLVHSVQKLFAKSHSLEAPGKRDYNGPKAEGRSSSGGDSYSGPGSGGPPTSHHHHHHHHHHHHQSRHGKRSKSKDRKGDGRHQTKATGWWSSDDNLDSDSGFLGGRPPGEPGGPFCLDAPDGSYRDLSFKGRSGGSEGRCLACTGMSMSLDGQSVKRSAWHTMMVSQGRDGYPGAGPGKGLLGPETKAKARTYHYLQVPQDDWGGYPTGGKDGEIPCRRMRSGSYIKAMGDEESGDSDGSPKTSPKALARRFASRRSSSVDTARINCCVPPRIHPRSSIPGYSRSLTTGQLSEEFNQQLEAVCGSVFGELESQAVDALDLPGCFRMRSHSYLRAIQAGCSQDDDCLPLLAAPASVSGRPGSSFNFRKAPPPIPPGSQAPPRISITAQSSTDSAHESFTAAEGPARRCSSADGLDGPTMGARTLELAPVPPRASPKPPTLIIKTIPGREELRSLARQRKWRPSIGVQVETISDSDTENRSRREFHSIGVQVEEDKRRARFKRSNSVTAGVQADLELEGLAGLATVATEDKALQFGRPFQRQASEPQPGPRAPTYSVFRTVHTQGQWAYREGYPLPYEPPATDGSPGPPPVPAPGPGSGRRDSWMERGSRSLPDSGRTSPCPRDGEWFIKMLRAEVEKLEHWCQQMEREAEDYELPEEILEKIRSAVGSTQLLLSQKVQQFFRLCQQSLDPTAFPVPTFQDLAGFWDLLQLSIEDVTLKFLELQQLKANSWKLLEPKEEKKVPPPIPKKPSRGRGVPVKERSLDSVDRQRQEARKRLLAAKRAASFRHSSATESADSIEIYIPEAQTRL.

Basic and acidic residues predominate over residues 1-10; sequence MRGYHGDRGS. Disordered stretches follow at residues 1–30, 52–90, 137–167, 181–289, 398–417, and 529–582; these read MRGY…PAAR, AGLG…SSTF, FHTL…ESPS, AKSH…CLDA, AMGD…SPKA, and PGSS…SADG. Low complexity predominate over residues 53 to 73; sequence GLGHLSPEGPLSLSEGPSSVG. Ser58 is subject to Phosphoserine. Over residues 74–85 the composition is skewed to gly residues; sequence PEGGPGGVGAGG. Positions 189-201 are enriched in basic and acidic residues; sequence PGKRDYNGPKAEG. Low complexity predominate over residues 202-212; the sequence is RSSSGGDSYSG. The span at 221 to 245 shows a compositional bias: basic residues; the sequence is SHHHHHHHHHHHHQSRHGKRSKSKD. Positions 258-271 are enriched in low complexity; it reads GWWSSDDNLDSDSG. Ser404, Ser407, Ser410, and Ser414 each carry phosphoserine. Residues 538–547 are compositionally biased toward pro residues; sequence APPPIPPGSQ. Residues Ser641 and Ser643 each carry the phosphoserine modification. Disordered stretches follow at residues 739 to 788 and 906 to 939; these read EGYP…RTSP and EEKK…RQRQ. The span at 754-763 shows a compositional bias: pro residues; the sequence is PGPPPVPAPG. Composition is skewed to basic and acidic residues over residues 767-777 and 925-939; these read GRRDSWMERGS and PVKE…RQRQ. Residues Ser930, Ser933, and Ser965 each carry the phosphoserine modification.

It belongs to the SAPAP family. As to quaternary structure, interacts with DLG1 and DLG4/PSD-95. Expressed in most brain regions.

Its subcellular location is the cell membrane. The protein localises to the postsynaptic density. The protein resides in the synapse. In terms of biological role, may play a role in the molecular organization of synapses and neuronal cell signaling. Could be an adapter protein linking ion channel to the subsynaptic cytoskeleton. May induce enrichment of PSD-95/SAP90 at the plasma membrane. The chain is Disks large-associated protein 3 (Dlgap3) from Rattus norvegicus (Rat).